The primary structure comprises 76 residues: Large ribosomal subunit protein eL20 (76 aa).

It belongs to the eukaryotic ribosomal protein eL20 family. As to quaternary structure, part of the 50S ribosomal subunit. Binds 23S rRNA.

The protein is Large ribosomal subunit protein eL20 of Methanococcus maripaludis (strain C5 / ATCC BAA-1333).